The sequence spans 421 residues: Plant UBX domain-containing protein 5 (421 aa).

The UBA domain maps to 4 to 45; it reads ETNENLINSFIEITSSSREEANFFLESHTWNLDAAVSTFLDN. Disordered stretches follow at residues 46 to 171 and 292 to 338; these read DAAA…MMVQ and ENFT…PSRG. Polar residues predominate over residues 69–84; the sequence is QSPSQSHSPDYTPSET. A compositionally biased stretch (low complexity) spans 85 to 102; that stretch reads SPSPSRSRSASPSSRAAP. The SEP domain maps to 231–295; sequence RIMHTITFWL…DLVRRGENFT (65 aa). Residues 312–328 show a composition bias toward low complexity; it reads GASGSGSSSAPQASSAP. One can recognise a UBX domain in the interval 343–420; sequence PAAPTTSIQL…GIANAVVIQK (78 aa).

As to quaternary structure, interacts with CDC48A (non-hexameric) via its UBX domain.

The sequence is that of Plant UBX domain-containing protein 5 from Arabidopsis thaliana (Mouse-ear cress).